A 397-amino-acid chain; its full sequence is Succinyl-diaminopimelate desuccinylase (397 aa).

Residue histidine 73 participates in Zn(2+) binding. Aspartate 75 is a catalytic residue. Aspartate 106 contacts Zn(2+). Glutamate 140 serves as the catalytic Proton acceptor. The Zn(2+) site is built by glutamate 141, glutamate 169, and histidine 366.

Belongs to the peptidase M20A family. DapE subfamily. As to quaternary structure, homodimer. It depends on Zn(2+) as a cofactor. Requires Co(2+) as cofactor.

The catalysed reaction is N-succinyl-(2S,6S)-2,6-diaminopimelate + H2O = (2S,6S)-2,6-diaminopimelate + succinate. Its pathway is amino-acid biosynthesis; L-lysine biosynthesis via DAP pathway; LL-2,6-diaminopimelate from (S)-tetrahydrodipicolinate (succinylase route): step 3/3. Catalyzes the hydrolysis of N-succinyl-L,L-diaminopimelic acid (SDAP), forming succinate and LL-2,6-diaminopimelate (DAP), an intermediate involved in the bacterial biosynthesis of lysine and meso-diaminopimelic acid, an essential component of bacterial cell walls. In Rhizobium etli (strain ATCC 51251 / DSM 11541 / JCM 21823 / NBRC 15573 / CFN 42), this protein is Succinyl-diaminopimelate desuccinylase.